The chain runs to 454 residues: MPRCPAGAMDEGPVDLRTRPKAAGLPGAALPLRKRPLRAPSPEPAAPRGAAGLVVPLDPLRGGCDLPAVPGPPHGLARPEALYYPGALLPLYPTRAMGSPFPLVNLPTPLYPMMCPMEHPLSADIAMATRADEDGDTPLHIAVVQGNLPAVHRLVNLFQQGGRELDIYNNLRQTPLHLAVITTLPSVVRLLVTAGASPMALDRHGQTAAHLACEHRSPTCLRALLDSAAPGTLDLEARNYDGLTALHVAVNTECQETVQLLLERGADIDAVDIKSGRSPLIHAVENNSLSMVQLLLQHGANVNAQMYSGSSALHSASGRGLLPLVRTLVRSGADSSLKNCHNDTPLMVARSRRVIDILRGKATRPASTSQPDPSPDRSANTSPESSSRLSSNGLLSASPSSSPSQSPPRDPPGFPMAPPNFFLPSPSPPAFLPFAGVLRGPGRPVPPSPAPGGS.

Residues 1 to 50 (MPRCPAGAMDEGPVDLRTRPKAAGLPGAALPLRKRPLRAPSPEPAAPRGA) are disordered. Over residues 21–31 (KAAGLPGAALP) the composition is skewed to low complexity. Ser-41 carries the phosphoserine modification. ANK repeat units lie at residues 134-163 (DGDTPLHIAVVQGNLPAVHRLVNLFQQGGR), 171-200 (LRQTPLHLAVITTLPSVVRLLVTAGASPMA), 204-235 (HGQTAAHLACEHRSPTCLRALLDSAAPGTLDL), 241-270 (DGLTALHVAVNTECQETVQLLLERGADIDA), 275-304 (SGRSPLIHAVENNSLSMVQLLLQHGANVNA), 308-337 (SGSSALHSASGRGLLPLVRTLVRSGADSSL), and 338-367 (KNCHNDTPLMVARSRRVIDILRGKATRPAS). Residues 360–454 (GKATRPASTS…VPPSPAPGGS (95 aa)) are disordered. Positions 365–381 (PASTSQPDPSPDRSANT) are enriched in polar residues. A Phosphoserine modification is found at Ser-374. Residues 382-404 (SPESSSRLSSNGLLSASPSSSPS) show a composition bias toward low complexity. Phosphoserine; by GSK3 occurs at positions 402 and 406. Residues 405–418 (QSPPRDPPGFPMAP) are compositionally biased toward pro residues. Positions 432 to 442 (LPFAGVLRGPG) are enriched in low complexity. Pro residues predominate over residues 443–454 (RPVPPSPAPGGS).

As to quaternary structure, component of a complex consisting of the NF-kappa-B p52-p52 homodimer and BCL3. Component of a complex consisting of the NF-kappa-B p50-p50 homodimer and BCL3. Interacts with N4BP2, COPS5 and PIR. Interacts with CYLD. In terms of processing, polyubiquitinated. Ubiquitination via 'Lys-63'-linked ubiquitin chains is required for nuclear accumulation. Deubiquitinated by CYLD, which acts on 'Lys-63'-linked ubiquitin chains. Deubiquitination by CYLD prevents nuclear accumulation. Post-translationally, activated by phosphorylation.

It localises to the nucleus. Its subcellular location is the cytoplasm. The protein localises to the perinuclear region. Functionally, contributes to the regulation of transcriptional activation of NF-kappa-B target genes. In the cytoplasm, inhibits the nuclear translocation of the NF-kappa-B p50 subunit. In the nucleus, acts as transcriptional activator that promotes transcription of NF-kappa-B target genes. Contributes to the regulation of cell proliferation. The protein is B-cell lymphoma 3 protein (BCL3) of Homo sapiens (Human).